The sequence spans 422 residues: Zinc finger protein 550 (422 aa).

Positions 12–83 (VTFKDVAVTF…KRGLSHATCA (72 aa)) constitute a KRAB domain. The disordered stretch occupies residues 113–158 (LESSTSSDSRLGRARDEEGLLEMQKGKVTPETDLHKETHLGKVSLE). The span at 122-152 (RLGRARDEEGLLEMQKGKVTPETDLHKETHL) shows a compositional bias: basic and acidic residues. C2H2-type zinc fingers lie at residues 203–225 (YKCKQCGKGFNRKWYLVRHQRVH), 231–253 (YECNACGKAFSQSSTLIRHYLIH), 259–281 (YKCLECGKAFKRRSYLMQHHPIH), 287–309 (YECSQCRKAFTHRSTFIRHNRTH), 315–337 (FECKECEKAFSNRAHLIQHYIIH), 343–365 (YDCMACGKAFRCSSELIQHQRIH), 371–393 (YECTQCGKAFHRSTYLIQHSVIH), and 399–421 (YKCIECGKAFKRRSHLLQHQRVH).

The protein belongs to the krueppel C2H2-type zinc-finger protein family.

Its subcellular location is the nucleus. Its function is as follows. May be involved in transcriptional regulation. In Homo sapiens (Human), this protein is Zinc finger protein 550 (ZNF550).